The sequence spans 821 residues: PX domain-containing protein C1450.12 (821 aa).

One can recognise a PX domain in the interval 171-310; it reads AYVLGVRQST…SFLTDDPVTL (140 aa). Residues 235–271 are disordered; it reads KDDHDTYLNSSEDSTLSPLPSRSSDTNDPQSDSQHVL. The span at 241–268 shows a compositional bias: polar residues; the sequence is YLNSSEDSTLSPLPSRSSDTNDPQSDSQ. Phosphothreonine occurs at positions 260 and 597. Acidic residues-rich tracts occupy residues 737-746 and 754-766; these read GDEDDQDEND and EHME…EEFD. Residues 737-766 are disordered; sequence GDEDDQDENDQVTKVEEEHMEDDDSVEEFD. A Phosphoserine modification is found at Ser-761.

It is found in the mitochondrion membrane. This Schizosaccharomyces pombe (strain 972 / ATCC 24843) (Fission yeast) protein is PX domain-containing protein C1450.12.